The following is a 197-amino-acid chain: Recombination protein RecR (197 aa).

The C4-type zinc finger occupies 56–71 (CPVCGTLDTRAPCSIC). Positions 79 to 174 (TLICVVRDVA…TVSGLAQGVP (96 aa)) constitute a Toprim domain.

It belongs to the RecR family.

Functionally, may play a role in DNA repair. It seems to be involved in an RecBC-independent recombinational process of DNA repair. It may act with RecF and RecO. The chain is Recombination protein RecR from Rhodospirillum rubrum (strain ATCC 11170 / ATH 1.1.1 / DSM 467 / LMG 4362 / NCIMB 8255 / S1).